Consider the following 424-residue polypeptide: UPF0229 protein PFL_5654 (424 aa).

Residues 85 to 108 (GEHIARPQGGGGGGGGRGKAGNSG) form a disordered region. Residues 92–108 (QGGGGGGGGRGKAGNSG) show a composition bias toward gly residues.

It belongs to the UPF0229 family.

This is UPF0229 protein PFL_5654 from Pseudomonas fluorescens (strain ATCC BAA-477 / NRRL B-23932 / Pf-5).